Consider the following 126-residue polypeptide: Protein FMP49, mitochondrial (126 aa).

It localises to the mitochondrion. This chain is Protein FMP49, mitochondrial, found in Saccharomyces cerevisiae (strain ATCC 204508 / S288c) (Baker's yeast).